The sequence spans 365 residues: Aminomethyltransferase (365 aa).

Belongs to the GcvT family. The glycine cleavage system is composed of four proteins: P, T, L and H.

The enzyme catalyses N(6)-[(R)-S(8)-aminomethyldihydrolipoyl]-L-lysyl-[protein] + (6S)-5,6,7,8-tetrahydrofolate = N(6)-[(R)-dihydrolipoyl]-L-lysyl-[protein] + (6R)-5,10-methylene-5,6,7,8-tetrahydrofolate + NH4(+). Its function is as follows. The glycine cleavage system catalyzes the degradation of glycine. This Synechococcus sp. (strain CC9902) protein is Aminomethyltransferase.